Here is a 564-residue protein sequence, read N- to C-terminus: Threonine--tRNA ligase (564 aa).

Residues 167–464 (DHRSLGKQLE…LLEKTSGNFP (298 aa)) form a catalytic region. Zn(2+) is bound by residues cysteine 260, histidine 311, and histidine 441.

The protein belongs to the class-II aminoacyl-tRNA synthetase family. As to quaternary structure, homodimer. Zn(2+) is required as a cofactor.

It is found in the cytoplasm. The catalysed reaction is tRNA(Thr) + L-threonine + ATP = L-threonyl-tRNA(Thr) + AMP + diphosphate + H(+). Catalyzes the attachment of threonine to tRNA(Thr) in a two-step reaction: L-threonine is first activated by ATP to form Thr-AMP and then transferred to the acceptor end of tRNA(Thr). Also edits incorrectly charged L-seryl-tRNA(Thr). The sequence is that of Threonine--tRNA ligase from Mycoplasma genitalium (strain ATCC 33530 / DSM 19775 / NCTC 10195 / G37) (Mycoplasmoides genitalium).